Here is a 314-residue protein sequence, read N- to C-terminus: tRNA dimethylallyltransferase 1 (314 aa).

ATP is bound at residue 8 to 15 (GPTGTGKS). Position 10 to 15 (10 to 15 (TGTGKS)) interacts with substrate.

It belongs to the IPP transferase family. In terms of assembly, monomer. The cofactor is Mg(2+).

The enzyme catalyses adenosine(37) in tRNA + dimethylallyl diphosphate = N(6)-dimethylallyladenosine(37) in tRNA + diphosphate. Its function is as follows. Catalyzes the transfer of a dimethylallyl group onto the adenine at position 37 in tRNAs that read codons beginning with uridine, leading to the formation of N6-(dimethylallyl)adenosine (i(6)A). This is tRNA dimethylallyltransferase 1 from Mycobacterium marinum (strain ATCC BAA-535 / M).